The sequence spans 440 residues: Light-independent protochlorophyllide reductase subunit N (440 aa).

The tract at residues M1 to G24 is disordered. Residues C42, C67, and C128 each contribute to the [4Fe-4S] cluster site.

The protein belongs to the BchN/ChlN family. As to quaternary structure, protochlorophyllide reductase is composed of three subunits; BchL, BchN and BchB. Forms a heterotetramer of two BchB and two BchN subunits. The cofactor is [4Fe-4S] cluster.

The catalysed reaction is chlorophyllide a + oxidized 2[4Fe-4S]-[ferredoxin] + 2 ADP + 2 phosphate = protochlorophyllide a + reduced 2[4Fe-4S]-[ferredoxin] + 2 ATP + 2 H2O. It participates in porphyrin-containing compound metabolism; bacteriochlorophyll biosynthesis (light-independent). Its function is as follows. Component of the dark-operative protochlorophyllide reductase (DPOR) that uses Mg-ATP and reduced ferredoxin to reduce ring D of protochlorophyllide (Pchlide) to form chlorophyllide a (Chlide). This reaction is light-independent. The NB-protein (BchN-BchB) is the catalytic component of the complex. The protein is Light-independent protochlorophyllide reductase subunit N of Rhodospirillum rubrum (strain ATCC 11170 / ATH 1.1.1 / DSM 467 / LMG 4362 / NCIMB 8255 / S1).